The chain runs to 66 residues: Cold shock protein CspC (66 aa).

One can recognise a CSD domain in the interval 4-63 (GTVKWFNAEKGFGFIERENGDDVFVHFSAIQSDGFKSLDEGQKVSFDVEQGARGAQAANV).

Its subcellular location is the cytoplasm. The sequence is that of Cold shock protein CspC (cspC) from Bacillus subtilis (strain 168).